Reading from the N-terminus, the 448-residue chain is Glutamate--tRNA ligase 2 (448 aa).

The short motif at 9–19 (PSPTGKLHIGN) is the 'HIGH' region element. The 'KMSKS' region signature appears at 240–244 (KISKR). ATP is bound at residue K243.

The protein belongs to the class-I aminoacyl-tRNA synthetase family. Glutamate--tRNA ligase type 1 subfamily. As to quaternary structure, monomer.

It localises to the cytoplasm. It carries out the reaction tRNA(Glu) + L-glutamate + ATP = L-glutamyl-tRNA(Glu) + AMP + diphosphate. Functionally, catalyzes the attachment of glutamate to tRNA(Glu) in a two-step reaction: glutamate is first activated by ATP to form Glu-AMP and then transferred to the acceptor end of tRNA(Glu). The sequence is that of Glutamate--tRNA ligase 2 from Orientia tsutsugamushi (strain Boryong) (Rickettsia tsutsugamushi).